A 184-amino-acid chain; its full sequence is ATP synthase subunit b, chloroplastic (184 aa).

A helical membrane pass occupies residues 27–49 (LATNPINLSVVLGVLIFFGKGVL).

Belongs to the ATPase B chain family. F-type ATPases have 2 components, F(1) - the catalytic core - and F(0) - the membrane proton channel. F(1) has five subunits: alpha(3), beta(3), gamma(1), delta(1), epsilon(1). F(0) has four main subunits: a(1), b(1), b'(1) and c(10-14). The alpha and beta chains form an alternating ring which encloses part of the gamma chain. F(1) is attached to F(0) by a central stalk formed by the gamma and epsilon chains, while a peripheral stalk is formed by the delta, b and b' chains.

It localises to the plastid. The protein localises to the chloroplast thylakoid membrane. In terms of biological role, f(1)F(0) ATP synthase produces ATP from ADP in the presence of a proton or sodium gradient. F-type ATPases consist of two structural domains, F(1) containing the extramembraneous catalytic core and F(0) containing the membrane proton channel, linked together by a central stalk and a peripheral stalk. During catalysis, ATP synthesis in the catalytic domain of F(1) is coupled via a rotary mechanism of the central stalk subunits to proton translocation. Its function is as follows. Component of the F(0) channel, it forms part of the peripheral stalk, linking F(1) to F(0). In Cuscuta exaltata (Tall dodder), this protein is ATP synthase subunit b, chloroplastic.